Reading from the N-terminus, the 384-residue chain is Putative ankyrin repeat protein L72 (384 aa).

7 ANK repeats span residues 88 to 117, 119 to 146, 171 to 200, 202 to 231, 233 to 261, 298 to 324, and 325 to 357; these read ADMCIIGDIMNFYDINTIRYLIDNGANIKN, GNLLCQASQLGCIDIVKLLVKTSEKEFS, DHNVCILIAIVYKHIDVVKYFISIGEILSV, DDSLYFKLACDTGCLNIIKYLLEIGFDIES, NNYCLMISTINGRNDIVEYIKSRGVNPNN, ILYQLLLIACEYGYYSMTMYLIKAGIK, and PTNSCLKIACKNNKFNIVKLITKYPKTRLDINV.

The protein is Putative ankyrin repeat protein L72 of Acanthamoeba polyphaga (Amoeba).